A 113-amino-acid chain; its full sequence is Putative pterin-4-alpha-carbinolamine dehydratase (113 aa).

The protein belongs to the pterin-4-alpha-carbinolamine dehydratase family.

The enzyme catalyses (4aS,6R)-4a-hydroxy-L-erythro-5,6,7,8-tetrahydrobiopterin = (6R)-L-erythro-6,7-dihydrobiopterin + H2O. The sequence is that of Putative pterin-4-alpha-carbinolamine dehydratase from Legionella pneumophila (strain Lens).